Reading from the N-terminus, the 868-residue chain is mRNA-capping enzyme (868 aa).

Lys-282 functions as the N6-GMP-lysine intermediate in the catalytic mechanism. In terms of domain architecture, mRNA cap 0 methyltransferase spans 594-868 (GIYRAQTALI…LFGFICLRKN (275 aa)). S-adenosyl-L-methionine-binding positions include Lys-607, Gly-624, Asp-646, and 710–712 (LFI).

The protein in the N-terminal section; belongs to the dsDNA virus mRNA guanylyltransferase family. It in the C-terminal section; belongs to the class I-like SAM-binding methyltransferase superfamily. mRNA cap 0 methyltransferase family. In terms of assembly, part of the viral DNA-directed RNA polymerase that consists of 8 polII-like subunits (RPB1, RPB2, RPB3, RPB5, RPB6, RPB7, RPB9, RPB10), a capping enzyme and a termination factor.

Its subcellular location is the virion. The catalysed reaction is a 5'-end triphospho-ribonucleoside in mRNA + H2O = a 5'-end diphospho-ribonucleoside in mRNA + phosphate + H(+). It catalyses the reaction a 5'-end diphospho-ribonucleoside in mRNA + GTP + H(+) = a 5'-end (5'-triphosphoguanosine)-ribonucleoside in mRNA + diphosphate. The enzyme catalyses a 5'-end (5'-triphosphoguanosine)-ribonucleoside in mRNA + S-adenosyl-L-methionine = a 5'-end (N(7)-methyl 5'-triphosphoguanosine)-ribonucleoside in mRNA + S-adenosyl-L-homocysteine. It functions in the pathway mRNA processing; mRNA capping. In terms of biological role, probably catalyzes the second reaction in the mRNA cap formation pathway. Forms a covalent complex with GTP. The polypeptide is mRNA-capping enzyme (Ornithodoros (relapsing fever ticks)).